We begin with the raw amino-acid sequence, 371 residues long: Queuine tRNA-ribosyltransferase (371 aa).

Asp90 acts as the Proton acceptor in catalysis. Residues 90 to 94 (DSGGF), Asp144, Gln189, and Gly215 each bind substrate. The segment at 246–252 (GVGTPEN) is RNA binding. Asp265 serves as the catalytic Nucleophile. Residues 270-274 (TRNAR) form an RNA binding; important for wobble base 34 recognition region. Positions 303, 305, 308, and 334 each coordinate Zn(2+).

This sequence belongs to the queuine tRNA-ribosyltransferase family. As to quaternary structure, homodimer. Within each dimer, one monomer is responsible for RNA recognition and catalysis, while the other monomer binds to the replacement base PreQ1. Requires Zn(2+) as cofactor.

It catalyses the reaction 7-aminomethyl-7-carbaguanine + guanosine(34) in tRNA = 7-aminomethyl-7-carbaguanosine(34) in tRNA + guanine. It participates in tRNA modification; tRNA-queuosine biosynthesis. Catalyzes the base-exchange of a guanine (G) residue with the queuine precursor 7-aminomethyl-7-deazaguanine (PreQ1) at position 34 (anticodon wobble position) in tRNAs with GU(N) anticodons (tRNA-Asp, -Asn, -His and -Tyr). Catalysis occurs through a double-displacement mechanism. The nucleophile active site attacks the C1' of nucleotide 34 to detach the guanine base from the RNA, forming a covalent enzyme-RNA intermediate. The proton acceptor active site deprotonates the incoming PreQ1, allowing a nucleophilic attack on the C1' of the ribose to form the product. After dissociation, two additional enzymatic reactions on the tRNA convert PreQ1 to queuine (Q), resulting in the hypermodified nucleoside queuosine (7-(((4,5-cis-dihydroxy-2-cyclopenten-1-yl)amino)methyl)-7-deazaguanosine). The chain is Queuine tRNA-ribosyltransferase from Helicobacter pylori (strain P12).